Here is a 2000-residue protein sequence, read N- to C-terminus: MPGHRGAPHLPPWVCGLCSMDDFAEGGLSLADDILLEDYPYEDDCICTPDFTTDDYVRVTQLYYEGVGMQYKDYAQSEKNLEYDICNIWCSKPLSILQDYCDAIKLYIFWPLLFQHQHSSIISRLHPCVEAIRSRAAEISLKKLQHLELMEDIVDLAKKVANDSFLIEGLLKIGYKIENKILAMEDALNWIKYTGDVTILPKLGSVDSGWPMLSIFFTEYKYHITRVVTENCNLLEEFRRHSCMQCVKQGELMKMRGNEEFAKEKFEIAVIYYTRAIEYRPENHLLYGNRALCFLRMGQFRNALSDGKRAIVLKNTWPKGHYRYCDALSMLGEYDWALQANIKAQKLCKNDPEGIKDLIQQHIKLQKQIEDLQGRTSNRNPIKAFYESRAYIPRNSSAPAFRTSLNFVETERGFRKTKYRMANGGGHQNQKVADEALKGDDCDCHPEFLPPPSQPPRHKGKQKSRNNESEKPSSNSQVTLQVDLKSILEKQFSKSSRAAHQDFANIMKMLRSLIQDGYTALLEQRCRSAAQAFTELLNGLDPQKIKQLNLAMINYVLVVYGLAVSLLGIGRPEELSEAENQFKRIIEHYPNEGLDCLAYCGIGKVYLKKNRFLEALNHFEKAKTLICRLPGILTWPTSNVIIEESKPEKVKVMLEKFVEECKFPPVPDAVCCYQKCRGFSKIQIYLTDPDFKGFIRISCCQYCKVEFHMNCWKKLKTTTFNDKIDKDFLQGICLTPDCEGIISKIIIFSSGGQVKCEFEHKVVKEKAPSRPVLKQKCSSLEKLRLKEDKKLKRKIQKQEAKKLAQERMEEDLRESNPPKPEEPEETVESAQSCQFLDDRILQCIKQNADKIKSVVLNTSTLLKELLSWKVLSTEDYTTCFSSKNFVHEAVDYVIGHLIQEKNRVKTRIFLHVLSELKELDPKLAPWIQRLNSFGLDATGPFFTRYGASLKELDFNIVTFLWSEKYGHKLGSIEGKQLDYFCEPASVMEARCLIWLLEEHRDKFPALHSALDEFFDIMDSRCTVLRKQDSDEMPFGCIKVKNKGKKKKPKDSKPMLVGSGTASVTPSSETVTPEDHNRRNSDSAGPFAVPDHLRQDVEEFEALYDQHSSEYVVRNKKLWDINPKQKCSTLYDYFSQLLEEHGPLDMSDRMFSEEYEFFPEETRQILEKAGGLKSFLLGCPRFVVIDNCIALKKVASRLKKKRKKKNIKTKVEEISKTGEYLRVKLPLNPTAREFQPDVKSEAAAEDVTSIPGPADSSAPAAEDLKPQLDSDSSSGSASEDSRLEVVSPDLPTPLCEDASPSPTPAPEDAKPTYWTQSHLVTGFCTYLPFQGFGIAQSRPAYINMVPSLSQFTSIYTPLANISSEYPMPRSMPVVPSFVASERADGNAAAYFESHRLNTENASDDHTASETQILEGPLGMCVKSQSSTADARTALSEPEGNSRHSGSSDSLWEASLENVSGITDVPPAPSVAIQVSRSLIHQEVNTEPYAPFERQQGDLSQKEKECHLLREQLQVACEECEQMELRSSQETRDLEEKLQRHAEENKVSLPELQWALGKLDREIKKWHQEKKEIQERLKALKKKIKKVINTSDMSAQKNDGLDKECESQPDQSLGISSALTDEKAKVEESVRKGKELYEESQQRAVAAEVSVLENWKEREVCKLQGVATQAEACLKSLKLMNSDSAAYPDVECDILSWETFLSTVTEEIENTKCQFEEQIKAIKSGSRLSDLSSVQVSELLFPACSMIHPQLLSESSRHEDHGLVACVDSMTGAVLNDPYVGPDSGCSEEVPELSLGSPTHHPEGAQQLEVKKASQVSPSEQNPEADEKPSGQATRSSQSQKNPFNSIIEHLSVIFPCYASSELSGFIKKVRNKSKNSFSGLSIEEIVERVTEHIVEEQKKKKPNPGKDKKTSEAHPAASVSKSSPSPPLAAAGPSAKTKGQKKDDVPAPDGNSCQICHEIFKSKNMRVLKCGHKFHKGCFKQWLKGQSTCPTCGSSDLLSEE.

Positions 20 to 249 (MDDFAEGGLS…RHSCMQCVKQ (230 aa)) are interaction with POLG. 2 TPR repeats span residues 250–283 (GELM…RPEN) and 284–317 (HLLY…KNTW). A Phosphoserine modification is found at Ser397. Positions 442-478 (CDCHPEFLPPPSQPPRHKGKQKSRNNESEKPSSNSQV) are disordered. TPR repeat units lie at residues 556–592 (VLVV…YPNE) and 596–629 (CLAY…ICRL). The interval 804–828 (AQERMEEDLRESNPPKPEEPEETVE) is disordered. Ser1029 is subject to Phosphoserine. Disordered stretches follow at residues 1041–1087 (NKGK…GPFA), 1233–1308 (FQPD…PEDA), 1423–1448 (QSST…SSDS), 1806–1839 (LEVK…QSQK), and 1894–1947 (EEQK…VPAP). Residues 1059–1070 (GTASVTPSSETV) show a composition bias toward polar residues. Residue Ser1080 is modified to Phosphoserine. Over residues 1268–1277 (DSDSSSGSAS) the composition is skewed to low complexity. Positions 1829–1839 (GQATRSSQSQK) are enriched in polar residues. Residues 1894–1911 (EEQKKKKPNPGKDKKTSE) are compositionally biased toward basic and acidic residues. Low complexity predominate over residues 1912–1934 (AHPAASVSKSSPSPPLAAAGPSA). The segment at 1952-1991 (CQICHEIFKSKNMRVLKCGHKFHKGCFKQWLKGQSTCPTC) adopts an RING-type; atypical zinc-finger fold.

Interacts (when phosphorylated on Ser-397) with AKT1, AKT2 and AKT3 (when phosphorylated). Interacts with CIT. Interacts with POLG. Interacts with HSP70. Interacts with SMURF2. Phosphorylation on Ser-397 by Akt is required for ubiquitin ligase activity. In terms of processing, proteolytically cleaved into differently sized N- and C-terminal fragments.

Its subcellular location is the nucleus. It localises to the cytoplasm. The protein localises to the golgi apparatus. It catalyses the reaction S-ubiquitinyl-[E2 ubiquitin-conjugating enzyme]-L-cysteine + [acceptor protein]-L-lysine = [E2 ubiquitin-conjugating enzyme]-L-cysteine + N(6)-ubiquitinyl-[acceptor protein]-L-lysine.. Its pathway is protein modification; protein ubiquitination. Its function is as follows. E3 ubiquitin-protein ligase which catalyzes the formation of 'Lys-48'-polyubiquitin chains. Mediates the ubiquitination and subsequent degradation of phosphorylated Akt (AKT1, AKT2 and AKT3) in the nucleus. Acts as a terminal regulator of Akt signaling after activation; its phosphorylation by Akt, which is a prerequisite for ubiquitin ligase activity, suggests the existence of a regulation mechanism required to control Akt levels after activation. Positively regulates TGFB1-induced epithelial-mesenchymal transition and myofibroblast differentiation by mediating the ubiquitination and subsequent degradation of SMURF2. Regulates neuronal differentiation by regulating actin remodeling and Golgi organization via a signaling cascade involving RHOA, CIT and ROCK. Inhibits cell proliferation. The protein is E3 ubiquitin-protein ligase TTC3 of Rattus norvegicus (Rat).